Consider the following 371-residue polypeptide: Solute carrier family 35 member F6 (371 aa).

The N-terminal stretch at 1-25 (MAWTKHQLFLAGLMLVTGSINTLSA) is a signal peptide. 2 helical membrane passes run 48 to 68 (FLQAVGMFLGEFSCLAAFYLL) and 89 to 109 (LLFLPPALCDMTGTSLMYVAL). The 57-residue stretch at 104 to 160 (LMYVALNMTSASSFQMLRGAVIIFTGLFSVAFLGRRLVLSQWLGILATIAGLVVVGL) folds into the EamA domain. N-linked (GlcNAc...) asparagine glycosylation occurs at Asn-110. The next 7 helical transmembrane spans lie at 117-137 (FQMLRGAVIIFTGLFSVAFLG), 140-160 (LVLSQWLGILATIAGLVVVGL), 176-196 (VITGDLLIIMAQIIVAIQMVL), 216-236 (GLFGFVILSLLLVPMYYIPAG), 261-281 (LIAVALLGNISSIAFFNFAGI), 295-312 (LDSLRTVVIWALSLALGW), and 317-336 (ALQILGFLILLIGTALYNGL). The tract at residues 347-371 (GRPPAEESEQERLLGGSRTPINDAS) is disordered. Thr-365 carries the post-translational modification Phosphothreonine.

It belongs to the SLC35F solute transporter family. As to quaternary structure, interacts with SLC25A5.

The protein resides in the mitochondrion. The protein localises to the lysosome membrane. Functionally, involved in the maintenance of mitochondrial membrane potential in pancreatic ductal adenocarcinoma (PDAC) cells. Promotes pancreatic ductal adenocarcinoma (PDAC) cell growth. May play a role as a nucleotide-sugar transporter. This is Solute carrier family 35 member F6 (SLC35F6) from Pongo abelii (Sumatran orangutan).